The sequence spans 555 residues: Formate--tetrahydrofolate ligase (555 aa).

64–71 (TPAGEGKT) is a binding site for ATP.

The protein belongs to the formate--tetrahydrofolate ligase family.

It carries out the reaction (6S)-5,6,7,8-tetrahydrofolate + formate + ATP = (6R)-10-formyltetrahydrofolate + ADP + phosphate. It participates in one-carbon metabolism; tetrahydrofolate interconversion. This chain is Formate--tetrahydrofolate ligase, found in Dinoroseobacter shibae (strain DSM 16493 / NCIMB 14021 / DFL 12).